Consider the following 1059-residue polypeptide: Protein OPAQUE10 (1059 aa).

A run of 7 repeats spans residues 269–342 (SLLE…KESC), 343–416 (SLLE…KESC), 417–490 (SPLE…KESC), 491–564 (SPLE…KESC), 565–638 (FPLE…KESC), 639–712 (SPLE…KESC), and 713–786 (SPLE…KESC). Positions 269-786 (SLLEPEDSVN…SRPIHDKESC (518 aa)) are 7 X approximate repeats. Positions 511 to 534 (FNDAPNKESEGYGESGRGKHGEKS) are disordered. Residues 515-534 (PNKESEGYGESGRGKHGEKS) show a composition bias toward basic and acidic residues. 3 disordered regions span residues 732–756 (QYSD…EEKS), 856–875 (ETLA…DTGT), and 889–998 (SVCS…SGKG). The span at 858-869 (LADHPKKEEAGL) shows a compositional bias: basic and acidic residues. 2 stretches are compositionally biased toward polar residues: residues 907–924 (DFSS…NTGG) and 945–958 (ASDS…PEAS). Basic and acidic residues predominate over residues 984-994 (TRGRPEGDAPR). The chain crosses the membrane as a helical span at residues 1003-1023 (VAGGITLVGAVFFMFHLSAAL).

In terms of assembly, homodimer. Interacts (via N-terminus) with FL1 (via C-terminus), HIP, 19 kDa alpha-zein (AC P06677), 22 kDa alpha-zein (AC O48966), 16 kDa gamma-zein (AC P08031) and 50 kDa gamma-zein (AC C0P381). Expressed in kernels.

Its subcellular location is the endoplasmic reticulum membrane. Its function is as follows. Cereal endosperm protein required for the ring-shaped distribution of 22 kDa alpha- and 16 kDa gamma-zeins in protein bodies. This Zea mays (Maize) protein is Protein OPAQUE10.